A 195-amino-acid chain; its full sequence is Probable chorismate pyruvate-lyase (195 aa).

Residues arginine 79, leucine 117, and glutamate 180 each coordinate substrate.

This sequence belongs to the UbiC family.

Its subcellular location is the cytoplasm. The catalysed reaction is chorismate = 4-hydroxybenzoate + pyruvate. Its pathway is cofactor biosynthesis; ubiquinone biosynthesis. Functionally, removes the pyruvyl group from chorismate, with concomitant aromatization of the ring, to provide 4-hydroxybenzoate (4HB) for the ubiquinone pathway. In Ralstonia nicotianae (strain ATCC BAA-1114 / GMI1000) (Ralstonia solanacearum), this protein is Probable chorismate pyruvate-lyase.